The chain runs to 164 residues: Peptidyl-prolyl cis-trans isomerase (164 aa).

The PPIase cyclophilin-type domain occupies 7 to 163 (FFDLQANGEN…KKITIADCGQ (157 aa)).

This sequence belongs to the cyclophilin-type PPIase family. PPIase A subfamily.

The protein resides in the cytoplasm. The enzyme catalyses [protein]-peptidylproline (omega=180) = [protein]-peptidylproline (omega=0). With respect to regulation, binds cyclosporin A (CsA). CsA mediates some of its effects via an inhibitory action on PPIase. In terms of biological role, PPIases accelerate the folding of proteins. It catalyzes the cis-trans isomerization of proline imidic peptide bonds in oligopeptides. The polypeptide is Peptidyl-prolyl cis-trans isomerase (Hemicentrotus pulcherrimus (Sea urchin)).